Reading from the N-terminus, the 508-residue chain is PTS system mannitol-specific EIICB component (508 aa).

Residues 1–30 are Cytoplasmic-facing; the sequence is MSQTETQENKGLGRKVQAFGSFLSSMIMPN. The 333-residue stretch at 19–351 folds into the PTS EIIC type-2 domain; that stretch reads FGSFLSSMIM…LKFTKEPEED (333 aa). A helical membrane pass occupies residues 31–52; the sequence is IGAFIAWGFIAAIFIDGGWWPN. The Extracellular segment spans residues 53 to 56; the sequence is KDLS. A helical transmembrane segment spans residues 57–77; it reads ELAGPMISYLIPLLIAYSGGR. The Cytoplasmic segment spans residues 78–141; it reads LIHEMRGGII…QGFEMLFNNF (64 aa). Residues 142-163 form a helical membrane-spanning segment; that stretch reads SAGILGFIMTIVGFKILAPIME. Over 164–172 the chain is Extracellular; it reads FIMHILSLA. The chain crosses the membrane as a helical span at residues 173-193; sequence VEALVHAHLLPLVSIIVEPAK. Over 194-280 the chain is Cytoplasmic; that stretch reads IVFLNNAINH…VLMRPLLFIA (87 aa). Residues 281–300 form a helical membrane-spanning segment; the sequence is VILGGMTGVATYSLLDFGFK. At 301 to 320 the chain is on the extracellular side; it reads SPASPGSFIVYMLNAPKGEF. Residues 321 to 342 form a helical membrane-spanning segment; that stretch reads LHMVLGVLLAAIVSFIVAALIL. Over 343–508 the chain is Cytoplasmic; the sequence is KFTKEPEEDL…RYDELLENLK (166 aa). The segment at 355 to 400 is disordered; the sequence is ATEKMEASKGKKSSVSSKLKGNEDNNATSTTASTSTSENNEEQSEE. Residues 367-392 are compositionally biased toward low complexity; it reads SSVSSKLKGNEDNNATSTTASTSTSE. Residues 420 to 508 form the PTS EIIB type-2 domain; sequence NHVIFACDAG…RYDELLENLK (89 aa). Residue Cys-426 is the Phosphocysteine intermediate; for EIIB activity of the active site. Residue Cys-426 is modified to Phosphocysteine; by EIIA.

As to quaternary structure, homodimer.

It is found in the cell membrane. The catalysed reaction is D-mannitol(out) + N(pros)-phospho-L-histidyl-[protein] = D-mannitol 1-phosphate(in) + L-histidyl-[protein]. Functionally, the phosphoenolpyruvate-dependent sugar phosphotransferase system (sugar PTS), a major carbohydrate active transport system, catalyzes the phosphorylation of incoming sugar substrates concomitantly with their translocation across the cell membrane. The enzyme II CmtAB PTS system is involved in D-mannitol transport. The polypeptide is PTS system mannitol-specific EIICB component (mtlA) (Staphylococcus saprophyticus subsp. saprophyticus (strain ATCC 15305 / DSM 20229 / NCIMB 8711 / NCTC 7292 / S-41)).